The following is a 428-amino-acid chain: Glutamyl-tRNA reductase (428 aa).

Residues 49 to 52 (TCNR), S109, 114 to 116 (EGQ), and Q120 contribute to the substrate site. C50 serves as the catalytic Nucleophile. 189-194 (GAGKMS) is an NADP(+) binding site.

Belongs to the glutamyl-tRNA reductase family. As to quaternary structure, homodimer.

It carries out the reaction (S)-4-amino-5-oxopentanoate + tRNA(Glu) + NADP(+) = L-glutamyl-tRNA(Glu) + NADPH + H(+). Its pathway is porphyrin-containing compound metabolism; protoporphyrin-IX biosynthesis; 5-aminolevulinate from L-glutamyl-tRNA(Glu): step 1/2. The protein operates within porphyrin-containing compound metabolism; chlorophyll biosynthesis. Functionally, catalyzes the NADPH-dependent reduction of glutamyl-tRNA(Glu) to glutamate 1-semialdehyde (GSA). This chain is Glutamyl-tRNA reductase, found in Trichormus variabilis (strain ATCC 29413 / PCC 7937) (Anabaena variabilis).